Consider the following 358-residue polypeptide: GTPase Obg (358 aa).

In terms of domain architecture, Obg spans 1 to 159 (MKFVDEVTIR…RNLHLELRLL (159 aa)). The region spanning 160–334 (ADVGLLGMPN…LAQDVMNRLE (175 aa)) is the OBG-type G domain. Residues 166-173 (GMPNAGKS), 191-195 (FTTLY), 213-216 (DIPG), 284-287 (NKLD), and 315-317 (SAL) each bind GTP. The Mg(2+) site is built by serine 173 and threonine 193. Residues 337–358 (DEEAREAGERARREQRQEEGPE) are disordered. A compositionally biased stretch (basic and acidic residues) spans 341-358 (REAGERARREQRQEEGPE).

This sequence belongs to the TRAFAC class OBG-HflX-like GTPase superfamily. OBG GTPase family. Monomer. Mg(2+) serves as cofactor.

Its subcellular location is the cytoplasm. An essential GTPase which binds GTP, GDP and possibly (p)ppGpp with moderate affinity, with high nucleotide exchange rates and a fairly low GTP hydrolysis rate. Plays a role in control of the cell cycle, stress response, ribosome biogenesis and in those bacteria that undergo differentiation, in morphogenesis control. The chain is GTPase Obg from Alkalilimnicola ehrlichii (strain ATCC BAA-1101 / DSM 17681 / MLHE-1).